Reading from the N-terminus, the 327-residue chain is MQHLDKLVAQVLESINTATDVATLETLKVEFFGKKGHFTQLMQGLRDIPAEQRPAVGQKINDAKQIAQNALNQKKEALENTELNEKLAKESIDVSLPGRKSALGGLHPVSITIDRVVKFFSELGFTVANGPEIESDYYNFDALNIPTHHPARADHDTFWFDAQRLLRTQTSGVQIRTMQTTQPPIRIVAPGRVYRNDYDQTHTPMFHQIELLYIDKKANFTELKGLIHDFLKAFFEEDLQVRFRPSFFPFTEPSAEVDVMRQNGKWLEVLGCGMVHPNVLRNVGIDPEEYSGFAVGMGVERLTMLRYNVTDLRAFFENDLRFLKQFR.

Glutamate 252 contributes to the Mg(2+) binding site.

It belongs to the class-II aminoacyl-tRNA synthetase family. Phe-tRNA synthetase alpha subunit type 1 subfamily. In terms of assembly, tetramer of two alpha and two beta subunits. Mg(2+) serves as cofactor.

The protein localises to the cytoplasm. The catalysed reaction is tRNA(Phe) + L-phenylalanine + ATP = L-phenylalanyl-tRNA(Phe) + AMP + diphosphate + H(+). This is Phenylalanine--tRNA ligase alpha subunit from Haemophilus ducreyi (strain 35000HP / ATCC 700724).